A 270-amino-acid chain; its full sequence is Type III pantothenate kinase (270 aa).

ATP is bound at residue 6-13; the sequence is DVRNTHTV. Substrate is bound at residue 109-112; that stretch reads GADR. Catalysis depends on aspartate 111, which acts as the Proton acceptor. Aspartate 131 is a binding site for K(+). Serine 134 contributes to the ATP binding site. Position 186 (threonine 186) interacts with substrate.

Belongs to the type III pantothenate kinase family. As to quaternary structure, homodimer. NH4(+) serves as cofactor. The cofactor is K(+).

The protein localises to the cytoplasm. The enzyme catalyses (R)-pantothenate + ATP = (R)-4'-phosphopantothenate + ADP + H(+). The protein operates within cofactor biosynthesis; coenzyme A biosynthesis; CoA from (R)-pantothenate: step 1/5. In terms of biological role, catalyzes the phosphorylation of pantothenate (Pan), the first step in CoA biosynthesis. In Mycolicibacterium gilvum (strain PYR-GCK) (Mycobacterium gilvum (strain PYR-GCK)), this protein is Type III pantothenate kinase.